The following is a 518-amino-acid chain: 2-isopropylmalate synthase (518 aa).

Residues 4 to 266 (INFFDTTLRD…ESTIQLNEIK (263 aa)) enclose the Pyruvate carboxyltransferase domain. 4 residues coordinate Mn(2+): D13, H201, H203, and N237. Residues 391-518 (DFISLQVHYG…GLSKQAAVGS (128 aa)) are regulatory domain.

Belongs to the alpha-IPM synthase/homocitrate synthase family. LeuA type 1 subfamily. In terms of assembly, homodimer. Requires Mn(2+) as cofactor.

Its subcellular location is the cytoplasm. The enzyme catalyses 3-methyl-2-oxobutanoate + acetyl-CoA + H2O = (2S)-2-isopropylmalate + CoA + H(+). The protein operates within amino-acid biosynthesis; L-leucine biosynthesis; L-leucine from 3-methyl-2-oxobutanoate: step 1/4. In terms of biological role, catalyzes the condensation of the acetyl group of acetyl-CoA with 3-methyl-2-oxobutanoate (2-ketoisovalerate) to form 3-carboxy-3-hydroxy-4-methylpentanoate (2-isopropylmalate). The chain is 2-isopropylmalate synthase from Bacillus licheniformis (strain ATCC 14580 / DSM 13 / JCM 2505 / CCUG 7422 / NBRC 12200 / NCIMB 9375 / NCTC 10341 / NRRL NRS-1264 / Gibson 46).